A 120-amino-acid polypeptide reads, in one-letter code: uncharacterized protein (120 aa).

The Nudix hydrolase domain maps to 29–120 (QRQAAVLVPI…QVTPVVGIIP (92 aa)). The Nudix box signature appears at 67–89 (GAVDNSDATLIAAALREAQEEVA). Positions 83 and 87 each coordinate Mg(2+).

It belongs to the Nudix hydrolase family. PCD1 subfamily. It depends on Mn(2+) as a cofactor. Mg(2+) serves as cofactor.

In terms of biological role, probably mediates the hydrolysis of some nucleoside diphosphate derivatives. This is an uncharacterized protein from Klebsiella aerogenes (Enterobacter aerogenes).